Here is a 285-residue protein sequence, read N- to C-terminus: Polyamine aminopropyltransferase (285 aa).

One can recognise a PABS domain in the interval 5–241; that stretch reads DNWYIEHFQP…GWWSVTMASK (237 aa). Position 35 (Gln35) interacts with S-methyl-5'-thioadenosine. Spermidine-binding residues include His66 and Asp90. Residues Asp110 and 141 to 142 contribute to the S-methyl-5'-thioadenosine site; that span reads DG. Asp160 serves as the catalytic Proton acceptor. A spermidine-binding site is contributed by 160-163; that stretch reads DSTD. S-methyl-5'-thioadenosine is bound at residue Pro167.

This sequence belongs to the spermidine/spermine synthase family. Homodimer or homotetramer.

Its subcellular location is the cytoplasm. The catalysed reaction is S-adenosyl 3-(methylsulfanyl)propylamine + putrescine = S-methyl-5'-thioadenosine + spermidine + H(+). The protein operates within amine and polyamine biosynthesis; spermidine biosynthesis; spermidine from putrescine: step 1/1. Its function is as follows. Catalyzes the irreversible transfer of a propylamine group from the amino donor S-adenosylmethioninamine (decarboxy-AdoMet) to putrescine (1,4-diaminobutane) to yield spermidine. The chain is Polyamine aminopropyltransferase from Xanthomonas axonopodis pv. citri (strain 306).